The following is a 957-amino-acid chain: Glycine dehydrogenase (decarboxylating) (957 aa).

An N6-(pyridoxal phosphate)lysine modification is found at K702.

This sequence belongs to the GcvP family. The glycine cleavage system is composed of four proteins: P, T, L and H. Pyridoxal 5'-phosphate is required as a cofactor.

The enzyme catalyses N(6)-[(R)-lipoyl]-L-lysyl-[glycine-cleavage complex H protein] + glycine + H(+) = N(6)-[(R)-S(8)-aminomethyldihydrolipoyl]-L-lysyl-[glycine-cleavage complex H protein] + CO2. Functionally, the glycine cleavage system catalyzes the degradation of glycine. The P protein binds the alpha-amino group of glycine through its pyridoxal phosphate cofactor; CO(2) is released and the remaining methylamine moiety is then transferred to the lipoamide cofactor of the H protein. The polypeptide is Glycine dehydrogenase (decarboxylating) (Bradyrhizobium sp. (strain BTAi1 / ATCC BAA-1182)).